The following is a 159-amino-acid chain: Cytochrome c-type biogenesis protein CcmE (159 aa).

The Cytoplasmic segment spans residues 1-8 (MNIRRKNR). A helical; Signal-anchor for type II membrane protein transmembrane segment spans residues 9-29 (LWIACAVLAGLALTIGLVLYA). Over 30-159 (LRSNIDLFYT…PASVYKDPAS (130 aa)) the chain is Periplasmic. 2 residues coordinate heme: His130 and Tyr134. Residues 132–147 (ENYTPPEVEKAMEANH) are compositionally biased toward basic and acidic residues. Residues 132–159 (ENYTPPEVEKAMEANHRRPASVYKDPAS) form a disordered region.

This sequence belongs to the CcmE/CycJ family.

It is found in the cell inner membrane. Heme chaperone required for the biogenesis of c-type cytochromes. Transiently binds heme delivered by CcmC and transfers the heme to apo-cytochromes in a process facilitated by CcmF and CcmH. This chain is Cytochrome c-type biogenesis protein CcmE, found in Escherichia coli (strain 55989 / EAEC).